We begin with the raw amino-acid sequence, 151 residues long: Transcriptional regulator MraZ (151 aa).

SpoVT-AbrB domains lie at 5–56 and 85–128; these read THRH…PLPT and SEEL…DAAR.

It belongs to the MraZ family. Forms oligomers.

The protein resides in the cytoplasm. Its subcellular location is the nucleoid. The sequence is that of Transcriptional regulator MraZ from Acidithiobacillus ferrooxidans (strain ATCC 23270 / DSM 14882 / CIP 104768 / NCIMB 8455) (Ferrobacillus ferrooxidans (strain ATCC 23270)).